The following is a 1058-amino-acid chain: Carbamoyl phosphate synthase large chain (1058 aa).

Residues 1–399 form a carboxyphosphate synthetic domain region; the sequence is MPIDKDIKKV…AIQKAIRSLD (399 aa). 12 residues coordinate ATP: Arg-127, Arg-167, Gly-173, Gly-174, Glu-206, Val-208, Glu-213, Gly-239, Ile-240, His-241, Gln-282, and Glu-296. Residues 131-325 enclose the ATP-grasp 1 domain; it reads GHFMDKLNEP…IAKISSKIAL (195 aa). Mg(2+) is bound by residues Gln-282, Glu-296, and Asn-298. Residues Gln-282, Glu-296, and Asn-298 each coordinate Mn(2+). The segment at 400 to 538 is oligomerization domain; the sequence is MGHDGFEYVE…YSTYDSGNEL (139 aa). A carbamoyl phosphate synthetic domain region spans residues 539 to 924; the sequence is KSSNKKKIVI…YKSQLAAGMD (386 aa). The region spanning 663 to 856 is the ATP-grasp 2 domain; it reads AKLLNKLHIH…LAKVATWIMT (194 aa). ATP-binding residues include Arg-699, Lys-738, Leu-740, Glu-745, Gly-770, Val-771, His-772, Ser-773, Gln-813, and Glu-827. Gln-813, Glu-827, and Asn-829 together coordinate Mg(2+). 3 residues coordinate Mn(2+): Gln-813, Glu-827, and Asn-829. Residues 923-1058 enclose the MGS-like domain; that stretch reads MDLPKEGKIF…KSLNEHIDGE (136 aa). The interval 925–1058 is allosteric domain; sequence LPKEGKIFIS…KSLNEHIDGE (134 aa).

It belongs to the CarB family. Composed of two chains; the small (or glutamine) chain promotes the hydrolysis of glutamine to ammonia, which is used by the large (or ammonia) chain to synthesize carbamoyl phosphate. Tetramer of heterodimers (alpha,beta)4. Mg(2+) is required as a cofactor. It depends on Mn(2+) as a cofactor.

The enzyme catalyses hydrogencarbonate + L-glutamine + 2 ATP + H2O = carbamoyl phosphate + L-glutamate + 2 ADP + phosphate + 2 H(+). It carries out the reaction hydrogencarbonate + NH4(+) + 2 ATP = carbamoyl phosphate + 2 ADP + phosphate + 2 H(+). The protein operates within amino-acid biosynthesis; L-arginine biosynthesis; carbamoyl phosphate from bicarbonate: step 1/1. Its pathway is pyrimidine metabolism; UMP biosynthesis via de novo pathway; (S)-dihydroorotate from bicarbonate: step 1/3. In terms of biological role, large subunit of the glutamine-dependent carbamoyl phosphate synthetase (CPSase). CPSase catalyzes the formation of carbamoyl phosphate from the ammonia moiety of glutamine, carbonate, and phosphate donated by ATP, constituting the first step of 2 biosynthetic pathways, one leading to arginine and/or urea and the other to pyrimidine nucleotides. The large subunit (synthetase) binds the substrates ammonia (free or transferred from glutamine from the small subunit), hydrogencarbonate and ATP and carries out an ATP-coupled ligase reaction, activating hydrogencarbonate by forming carboxy phosphate which reacts with ammonia to form carbamoyl phosphate. This Methanobrevibacter smithii (strain ATCC 35061 / DSM 861 / OCM 144 / PS) protein is Carbamoyl phosphate synthase large chain.